We begin with the raw amino-acid sequence, 103 residues long: Small ribosomal subunit protein uS10c (103 aa).

This sequence belongs to the universal ribosomal protein uS10 family. In terms of assembly, part of the 30S ribosomal subunit.

It is found in the plastid. Its subcellular location is the chloroplast. In terms of biological role, involved in the binding of tRNA to the ribosomes. The chain is Small ribosomal subunit protein uS10c from Emiliania huxleyi (Coccolithophore).